Here is a 54-residue protein sequence, read N- to C-terminus: Preprotein translocase subunit SecG (54 aa).

Residues 1–31 (MSSGQNSGGLMSSAGLVRYFDAEDRNSIRID) lie on the Cytoplasmic side of the membrane. Residues 32–53 (PKTIVAFGVLFGVGVLVLNALA) form a helical membrane-spanning segment. A topological domain (extracellular) is located at residue I54.

The protein belongs to the SEC61-beta family. In terms of assembly, component of the protein translocase complex. Heterotrimer consisting of alpha (SecY), beta (SecG) and gamma (SecE) subunits. Can form oligomers of the heterotrimer.

Its subcellular location is the cell membrane. Functionally, involved in protein export. The function of the beta subunit is unknown, but it may be involved in stabilization of the trimeric complex. The polypeptide is Preprotein translocase subunit SecG (Haloquadratum walsbyi (strain DSM 16790 / HBSQ001)).